Reading from the N-terminus, the 452-residue chain is Protoheme IX farnesyltransferase, mitochondrial (452 aa).

A mitochondrion-targeting transit peptide spans 1–27 (MSLVIQPLLMRALNPNLSSILISGRGF). Transmembrane regions (helical) follow at residues 152 to 172 (VLVMLSAICSYALSPYPATVL), 235 to 255 (ILWLGVNPTVAFLGFSNIALY), 267 to 287 (IINTWVGALVGAIPPLMGWAA), 291 to 311 (LSHPGAWCLAGLLYAWQFPHF), 341 to 361 (VALRYSLLMFPLCFGLSYFNV), 364 to 386 (WYYQLDSAFVNAWMSLWAFKFYF), and 417 to 437 (TFWVSVLHLPAVLILAILHKK).

The protein belongs to the UbiA prenyltransferase family.

Its subcellular location is the mitochondrion membrane. In terms of biological role, converts protoheme IX and farnesyl diphosphate to heme O. The chain is Protoheme IX farnesyltransferase, mitochondrial (COX10) from Kluyveromyces lactis (strain ATCC 8585 / CBS 2359 / DSM 70799 / NBRC 1267 / NRRL Y-1140 / WM37) (Yeast).